The sequence spans 666 residues: DNA ligase (666 aa).

Residues 34 to 38 (DAEYD), 83 to 84 (SL), and E114 contribute to the NAD(+) site. Catalysis depends on K116, which acts as the N6-AMP-lysine intermediate. NAD(+) contacts are provided by R137, E171, K286, and K310. Zn(2+) is bound by residues C404, C407, C422, and C427. One can recognise a BRCT domain in the interval 588–666 (NTESTISEKS…EEFFAILKGE (79 aa)).

This sequence belongs to the NAD-dependent DNA ligase family. LigA subfamily. It depends on Mg(2+) as a cofactor. The cofactor is Mn(2+).

It carries out the reaction NAD(+) + (deoxyribonucleotide)n-3'-hydroxyl + 5'-phospho-(deoxyribonucleotide)m = (deoxyribonucleotide)n+m + AMP + beta-nicotinamide D-nucleotide.. Its function is as follows. DNA ligase that catalyzes the formation of phosphodiester linkages between 5'-phosphoryl and 3'-hydroxyl groups in double-stranded DNA using NAD as a coenzyme and as the energy source for the reaction. It is essential for DNA replication and repair of damaged DNA. This chain is DNA ligase, found in Mesoplasma florum (strain ATCC 33453 / NBRC 100688 / NCTC 11704 / L1) (Acholeplasma florum).